We begin with the raw amino-acid sequence, 103 residues long: Nucleoid-associated protein NIS_0256 (103 aa).

The protein belongs to the YbaB/EbfC family. Homodimer.

It is found in the cytoplasm. The protein localises to the nucleoid. In terms of biological role, binds to DNA and alters its conformation. May be involved in regulation of gene expression, nucleoid organization and DNA protection. The protein is Nucleoid-associated protein NIS_0256 of Nitratiruptor sp. (strain SB155-2).